The sequence spans 306 residues: Probable C-terminal domain small phosphatase (306 aa).

Positions 1-36 (MNSSPITQVSNPNDSLNHSSTNLIPSSHNSLNNYPQ) are enriched in polar residues. Disordered stretches follow at residues 1 to 45 (MNSS…NRKK) and 61 to 116 (NDQN…NKDS). Low complexity predominate over residues 61–111 (NDQNNGNNINTDNGASNNDKLQQQKQYNQQQQQQYNQHQQQQQQQQQQQQY). Positions 132–290 (RHVGLKTLVL…LDLLPLLDDL (159 aa)) constitute an FCP1 homology domain. The active-site 4-aspartylphosphate intermediate is Asp142. Residues Asp142, Asp144, and Asn253 each contribute to the Mg(2+) site. The active-site Proton donor is the Asp144.

In terms of assembly, monomer. It depends on Mg(2+) as a cofactor.

The protein localises to the nucleus. The enzyme catalyses O-phospho-L-seryl-[protein] + H2O = L-seryl-[protein] + phosphate. It catalyses the reaction O-phospho-L-threonyl-[protein] + H2O = L-threonyl-[protein] + phosphate. Functionally, may function as a phosphatase involved in the regulation of cell growth and differentiation. The chain is Probable C-terminal domain small phosphatase (fcpA) from Dictyostelium discoideum (Social amoeba).